Reading from the N-terminus, the 68-residue chain is Conotoxin Cal12.1p1 (68 aa).

A propeptide spanning residues aspartate 1–threonine 23 is cleaved from the precursor.

Contains 4 disulfide bonds. As to expression, expressed by the venom duct.

It localises to the secreted. This Californiconus californicus (California cone) protein is Conotoxin Cal12.1p1.